The following is a 274-amino-acid chain: Acyl-[acyl-carrier-protein]--UDP-N-acetylglucosamine O-acyltransferase (274 aa).

This sequence belongs to the transferase hexapeptide repeat family. LpxA subfamily. Homotrimer.

The protein localises to the cytoplasm. It catalyses the reaction a (3R)-hydroxyacyl-[ACP] + UDP-N-acetyl-alpha-D-glucosamine = a UDP-3-O-[(3R)-3-hydroxyacyl]-N-acetyl-alpha-D-glucosamine + holo-[ACP]. Its pathway is glycolipid biosynthesis; lipid IV(A) biosynthesis; lipid IV(A) from (3R)-3-hydroxytetradecanoyl-[acyl-carrier-protein] and UDP-N-acetyl-alpha-D-glucosamine: step 1/6. In terms of biological role, involved in the biosynthesis of lipid A, a phosphorylated glycolipid that anchors the lipopolysaccharide to the outer membrane of the cell. The chain is Acyl-[acyl-carrier-protein]--UDP-N-acetylglucosamine O-acyltransferase from Bartonella bacilliformis (strain ATCC 35685 / KC583 / Herrer 020/F12,63).